A 201-amino-acid polypeptide reads, in one-letter code: Mediator of RNA polymerase II transcription subunit 22 (201 aa).

Residues 93 to 123 (SVNESINQRNQQLRTLREECDKKLIALRDDI) adopt a coiled-coil conformation. Positions 182–201 (SQIHTPPHLNGHGAGMTEHT) are disordered.

Belongs to the Mediator complex subunit 22 family. Component of the Mediator complex.

The protein localises to the nucleus. Its function is as follows. Component of the Mediator complex, a coactivator involved in the regulated transcription of nearly all RNA polymerase II-dependent genes. Mediator functions as a bridge to convey information from gene-specific regulatory proteins to the basal RNA polymerase II transcription machinery. Mediator is recruited to promoters by direct interactions with regulatory proteins and serves as a scaffold for the assembly of a functional preinitiation complex with RNA polymerase II and the general transcription factors. In Xenopus laevis (African clawed frog), this protein is Mediator of RNA polymerase II transcription subunit 22 (med22).